A 248-amino-acid polypeptide reads, in one-letter code: PF03932 family protein CutC (248 aa).

It belongs to the CutC family. Homodimer.

The protein resides in the cytoplasm. In Escherichia coli O139:H28 (strain E24377A / ETEC), this protein is PF03932 family protein CutC.